A 462-amino-acid chain; its full sequence is Nitrogenase iron-iron protein beta chain (462 aa).

4 residues coordinate [8Fe-7S] cluster: Cys20, Cys45, Cys104, and Ser143.

It belongs to the NifD/NifK/NifE/NifN family. As to quaternary structure, hexamer of two alpha, two beta, and two delta chains. [8Fe-7S] cluster serves as cofactor.

It catalyses the reaction N2 + 8 reduced [2Fe-2S]-[ferredoxin] + 16 ATP + 16 H2O = H2 + 8 oxidized [2Fe-2S]-[ferredoxin] + 2 NH4(+) + 16 ADP + 16 phosphate + 6 H(+). Its function is as follows. This iron-iron protein is part of the nitrogenase complex that catalyzes the key enzymatic reactions in nitrogen fixation. Other nitrogenase complexes utilize a molybdenum-iron protein or a vanadium-iron protein. In Azotobacter vinelandii, this protein is Nitrogenase iron-iron protein beta chain (anfK).